We begin with the raw amino-acid sequence, 249 residues long: DNA polymerase sliding clamp 1 (249 aa).

It belongs to the PCNA family. Homotrimer. The subunits circularize to form a toroid; DNA passes through its center. Replication factor C (RFC) is required to load the toroid on the DNA.

Sliding clamp subunit that acts as a moving platform for DNA processing. Responsible for tethering the catalytic subunit of DNA polymerase and other proteins to DNA during high-speed replication. This chain is DNA polymerase sliding clamp 1, found in Pyrobaculum aerophilum (strain ATCC 51768 / DSM 7523 / JCM 9630 / CIP 104966 / NBRC 100827 / IM2).